The primary structure comprises 182 residues: Alkyl hydroperoxide reductase AhpD (182 aa).

Residue cysteine 132 is the Proton donor of the active site. Cysteines 132 and 135 form a disulfide. Cysteine 135 acts as the Cysteine sulfenic acid (-SOH) intermediate in catalysis.

This sequence belongs to the AhpD family.

It catalyses the reaction N(6)-[(R)-dihydrolipoyl]-L-lysyl-[lipoyl-carrier protein] + a hydroperoxide = N(6)-[(R)-lipoyl]-L-lysyl-[lipoyl-carrier protein] + an alcohol + H2O. Functionally, antioxidant protein with alkyl hydroperoxidase activity. Required for the reduction of the AhpC active site cysteine residues and for the regeneration of the AhpC enzyme activity. This is Alkyl hydroperoxide reductase AhpD from Bradyrhizobium diazoefficiens (strain JCM 10833 / BCRC 13528 / IAM 13628 / NBRC 14792 / USDA 110).